We begin with the raw amino-acid sequence, 125 residues long: MISMANILFTEDHEWINVENGVATVGITIHAQEQLGDLVFVELPEVGRTVAKGDGVVVVESVKAASDVYAPVDGEVVEVNDAVASDPSLINQAAEGEGWLFKLKLADEGQLTGLLDKAGYEKLIG.

The region spanning 22-104 is the Lipoyl-binding domain; it reads VATVGITIHA…EGEGWLFKLK (83 aa). The residue at position 63 (Lys-63) is an N6-lipoyllysine.

This sequence belongs to the GcvH family. As to quaternary structure, the glycine cleavage system is composed of four proteins: P, T, L and H. The cofactor is (R)-lipoate.

Functionally, the glycine cleavage system catalyzes the degradation of glycine. The H protein shuttles the methylamine group of glycine from the P protein to the T protein. The sequence is that of Glycine cleavage system H protein from Brucella abortus (strain 2308).